Here is a 355-residue protein sequence, read N- to C-terminus: Probable butyrate kinase (355 aa).

The protein belongs to the acetokinase family.

The protein localises to the cytoplasm. It carries out the reaction butanoate + ATP = butanoyl phosphate + ADP. This chain is Probable butyrate kinase, found in Listeria monocytogenes serotype 4b (strain CLIP80459).